A 158-amino-acid chain; its full sequence is Sec-independent protein translocase protein TatB (158 aa).

A helical membrane pass occupies residues 1–21 (MFGISFSELLLVGLVALLVLG). Positions 73–158 (DEARKMFAPN…HDSSLPPRAP (86 aa)) are disordered. Over residues 80–90 (APNQPSENSPE) the composition is skewed to low complexity.

The protein belongs to the TatB family. In terms of assembly, the Tat system comprises two distinct complexes: a TatABC complex, containing multiple copies of TatA, TatB and TatC subunits, and a separate TatA complex, containing only TatA subunits. Substrates initially bind to the TatABC complex, which probably triggers association of the separate TatA complex to form the active translocon.

The protein localises to the cell inner membrane. Part of the twin-arginine translocation (Tat) system that transports large folded proteins containing a characteristic twin-arginine motif in their signal peptide across membranes. Together with TatC, TatB is part of a receptor directly interacting with Tat signal peptides. TatB may form an oligomeric binding site that transiently accommodates folded Tat precursor proteins before their translocation. The polypeptide is Sec-independent protein translocase protein TatB (Pseudomonas syringae pv. syringae (strain B728a)).